Reading from the N-terminus, the 42-residue chain is uncharacterized protein (42 aa).

Residues 15–35 (INVCLSFFFLFYFIFVLFFAA) form a helical membrane-spanning segment.

The protein resides in the membrane. This is an uncharacterized protein from Dictyostelium discoideum (Social amoeba).